The chain runs to 229 residues: PKHD-type hydroxylase Nham_1514 (229 aa).

In terms of domain architecture, Fe2OG dioxygenase spans 78 to 180; the sequence is QIFPPLFNRY…RVASFFWLQS (103 aa). Fe cation contacts are provided by H98, D100, and H161. R171 is a 2-oxoglutarate binding site.

It depends on Fe(2+) as a cofactor. L-ascorbate serves as cofactor.

This chain is PKHD-type hydroxylase Nham_1514, found in Nitrobacter hamburgensis (strain DSM 10229 / NCIMB 13809 / X14).